A 100-amino-acid chain; its full sequence is MDFSQLGGLSGLLDGVKKEFSQLEEKNKDTIHTSKSGGGMVSVSFNGLGELVDLQIDDSLLEDKEAMQIYLMSALNDGYKAVEENRKNLAFNMLGNFAKL.

This sequence belongs to the YbaB/EbfC family. Homodimer.

The protein localises to the cytoplasm. It localises to the nucleoid. Its function is as follows. Binds to DNA and alters its conformation. May be involved in regulation of gene expression, nucleoid organization and DNA protection. This Helicobacter pylori (strain J99 / ATCC 700824) (Campylobacter pylori J99) protein is Nucleoid-associated protein jhp_0031.